Consider the following 603-residue polypeptide: Elongation factor 4 (603 aa).

Residues 7–189 (SRLRNFCIIA…AVVDRIPSPK (183 aa)) enclose the tr-type G domain. Residues 19 to 24 (DHGKST) and 136 to 139 (NKVD) contribute to the GTP site.

Belongs to the TRAFAC class translation factor GTPase superfamily. Classic translation factor GTPase family. LepA subfamily.

The protein localises to the cell inner membrane. It carries out the reaction GTP + H2O = GDP + phosphate + H(+). Functionally, required for accurate and efficient protein synthesis under certain stress conditions. May act as a fidelity factor of the translation reaction, by catalyzing a one-codon backward translocation of tRNAs on improperly translocated ribosomes. Back-translocation proceeds from a post-translocation (POST) complex to a pre-translocation (PRE) complex, thus giving elongation factor G a second chance to translocate the tRNAs correctly. Binds to ribosomes in a GTP-dependent manner. This Prochlorococcus marinus (strain NATL1A) protein is Elongation factor 4.